Here is a 362-residue protein sequence, read N- to C-terminus: Molybdenum import ATP-binding protein ModC (362 aa).

The 236-residue stretch at M1–D236 folds into the ABC transporter domain. Position 36–43 (G36–T43) interacts with ATP. The Mop domain maps to D297–G362.

This sequence belongs to the ABC transporter superfamily. Molybdate importer (TC 3.A.1.8) family. The complex is composed of two ATP-binding proteins (ModC), two transmembrane proteins (ModB) and a solute-binding protein (ModA).

The protein localises to the cell inner membrane. It catalyses the reaction molybdate(out) + ATP + H2O = molybdate(in) + ADP + phosphate + H(+). Part of the ABC transporter complex ModABC involved in molybdenum import. Responsible for energy coupling to the transport system. The chain is Molybdenum import ATP-binding protein ModC from Saccharophagus degradans (strain 2-40 / ATCC 43961 / DSM 17024).